A 180-amino-acid chain; its full sequence is Calcium-binding protein E (180 aa).

4 consecutive EF-hand domains span residues 3–38 (KVEAQIEKIFTSFDKDGDGNLSWDEVFSRMSSNSNI), 40–76 (DPLAATKSMFDHYNRDADTENLSIQEIREVLMSKKIK), 85–120 (ALRSKVKDFRKKYDTDNDGVVTFDEMYQLYLKDPDF), and 139–174 (RAKSSCRYFFSAVDKDKNDKLSYLEIHEYLKKHPEF). Residues Asp16, Asp18, Asp20, Asn22, and Glu27 each contribute to the Ca(2+) site. Residues Asp98, Asp100, Asp102, Glu109, Asp152, Asp154, Asn156, Lys158, and Glu163 each coordinate Ca(2+).

This is Calcium-binding protein E (cbpE) from Dictyostelium discoideum (Social amoeba).